The primary structure comprises 977 residues: Myb-like protein I (977 aa).

The interval 1–122 (MMNNQSMVRY…QQQQQQLDKS (122 aa)) is disordered. Residues 21-39 (PSPPVYSPIYRSPPPPPQP) are compositionally biased toward pro residues. A compositionally biased stretch (basic and acidic residues) spans 52-68 (DNSHHQVMDNSDHEQQQ). Over residues 75–118 (QQQQQQQHHHQQQQQQQHHQQQQQQHHQQQQQHHHQQQQQQQQQ) the composition is skewed to low complexity. The 56-residue stretch at 167 to 222 (EKKKQSRYWTPEEHSRFIEALSKYGHKDVKSISQYVSTRNPTQVRTHAQKYFLRID) folds into the HTH myb-type domain. Residues 195–218 (VKSISQYVSTRNPTQVRTHAQKYF) constitute a DNA-binding region (H-T-H motif). Disordered stretches follow at residues 229–331 (LESK…SSPL), 422–516 (INNN…SSQP), 531–650 (NNNN…QQQM), 738–853 (LNSN…WPGP), and 872–960 (NYVP…GMNQ). Positions 241–252 (KDDDWLREEYND) are enriched in acidic residues. Residues 254–275 (GSPTQYSSCSNSPTTNSVANPF) are compositionally biased toward polar residues. Composition is skewed to low complexity over residues 276-329 (SNSL…GNSS) and 422-504 (INNN…INNN). The segment covering 505–516 (GPNSPNLLSSQP) has biased composition (polar residues). Residues 738-754 (LNSNSGNSSPNISSING) are compositionally biased toward low complexity. Over residues 783 to 797 (LSGSPSHSPAQSPHY) the composition is skewed to polar residues. Low complexity-rich tracts occupy residues 798–848 (NLNN…SHSI) and 887–943 (SPHF…GSGS). The segment covering 944 to 960 (WHQYQATDSPTGWGMNQ) has biased composition (polar residues).

The protein resides in the nucleus. The polypeptide is Myb-like protein I (mybI) (Dictyostelium discoideum (Social amoeba)).